We begin with the raw amino-acid sequence, 106 residues long: Large ribosomal subunit protein eL42 (106 aa).

Belongs to the eukaryotic ribosomal protein eL42 family. Component of the large ribosomal subunit.

The protein resides in the cytoplasm. Component of the large ribosomal subunit. The ribosome is a large ribonucleoprotein complex responsible for the synthesis of proteins in the cell. The polypeptide is Large ribosomal subunit protein eL42 (RPL36A) (Papio anubis (Olive baboon)).